The chain runs to 239 residues: Transcriptional regulatory protein RstA (239 aa).

A Response regulatory domain is found at T3–L116. Position 52 is a 4-aspartylphosphate (D52). Positions Y136–P235 form a DNA-binding region, ompR/PhoB-type.

Phosphorylated by RstB.

The protein resides in the cytoplasm. Member of the two-component regulatory system RstB/RstA. This Escherichia coli (strain K12) protein is Transcriptional regulatory protein RstA (rstA).